The chain runs to 289 residues: Serine/threonine-protein phosphatase Pgam5, mitochondrial (289 aa).

The chain crosses the membrane as a helical span at residues 7–23 (LVCGAGAGLAAFYLSRL).

This sequence belongs to the phosphoglycerate mutase family. BPG-dependent PGAM subfamily. Interacts with Pk92B/ASK1.

It localises to the mitochondrion outer membrane. The catalysed reaction is O-phospho-L-seryl-[protein] + H2O = L-seryl-[protein] + phosphate. The enzyme catalyses O-phospho-L-threonyl-[protein] + H2O = L-threonyl-[protein] + phosphate. Functionally, displays phosphatase activity for serine/threonine residues, and dephosphorylates and activates Pk92B kinase. Has apparently no phosphoglycerate mutase activity. The sequence is that of Serine/threonine-protein phosphatase Pgam5, mitochondrial from Drosophila ananassae (Fruit fly).